We begin with the raw amino-acid sequence, 271 residues long: Tritrans,polycis-undecaprenyl-diphosphate synthase (geranylgeranyl-diphosphate specific) (271 aa).

The active site involves D50. Residue D50 participates in Mg(2+) binding. Residues G51–R54, F55, H67, and S95–E97 contribute to the substrate site. The Proton acceptor role is filled by N98. Substrate is bound by residues R101, R220, and R226 to S228. E239 is a binding site for Mg(2+).

Belongs to the UPP synthase family. In terms of assembly, homodimer. Mg(2+) serves as cofactor.

The enzyme catalyses geranylgeranyl diphosphate + 7 isopentenyl diphosphate = tri-trans,hepta-cis-undecaprenyl diphosphate + 7 diphosphate. Functionally, catalyzes the sequential condensation of isopentenyl diphosphate (IPP) with geranylgeranyl diphosphate (GGPP) to yield (2Z,6Z,10Z,14Z,18Z,22Z,26Z,30E,34E,38E)-undecaprenyl diphosphate (tritrans,heptacis-UPP). It is probably the precursor of glycosyl carrier lipids. The sequence is that of Tritrans,polycis-undecaprenyl-diphosphate synthase (geranylgeranyl-diphosphate specific) from Methanopyrus kandleri (strain AV19 / DSM 6324 / JCM 9639 / NBRC 100938).